A 491-amino-acid polypeptide reads, in one-letter code: Cytochrome P450 2F2 (491 aa).

Cys-436 provides a ligand contact to heme.

It belongs to the cytochrome P450 family. Requires heme as cofactor. In terms of tissue distribution, club cells in lung and liver.

The protein localises to the endoplasmic reticulum membrane. The protein resides in the microsome membrane. Its function is as follows. Involved in the regio- and stereoselective transformation of naphthalene to trans-1R-hydroxy-2R-glutathionyl-1,2-dihydronaphthalene in the presence of glutathione and glutathione S-transferases. It specifically catalyzes the production of a very reactive and potentially toxic intermediate, the 2R,2S arene oxide, that is associated with necrosis of the unciliated bronchiolar epithelial cells or club cells in lung. The polypeptide is Cytochrome P450 2F2 (Cyp2f2) (Mus musculus (Mouse)).